The primary structure comprises 493 residues: ATP-dependent RNA helicase dbp3 (493 aa).

Residues 1-38 (MTKRDYQNDTTAESRPTKKSKGEKKVKETKEKKEKKVK) are disordered. Residues 23–34 (EKKVKETKEKKE) are compositionally biased toward basic and acidic residues. The Q motif signature appears at 97–105 (SFKSPTSIQ). Positions 109-285 (WPLLFGGRDV…STFMSSPVTV (177 aa)) constitute a Helicase ATP-binding domain. 122–129 (AETGSGKT) contacts ATP. A DEAD box motif is present at residues 232–235 (DEAD). The region spanning 316 to 462 (RLVQLLKQHQ…EVPEELLKFG (147 aa)) is the Helicase C-terminal domain.

This sequence belongs to the DEAD box helicase family. DDX5/DBP2 subfamily.

Its subcellular location is the nucleus. The protein resides in the nucleolus. It catalyses the reaction ATP + H2O = ADP + phosphate + H(+). ATP-dependent RNA helicase required for 60S ribosomal subunit synthesis. Involved in efficient pre-rRNA processing, predominantly at site A3, which is necessary for the normal formation of 25S and 5.8S rRNAs. In Aspergillus terreus (strain NIH 2624 / FGSC A1156), this protein is ATP-dependent RNA helicase dbp3 (dbp3).